Consider the following 179-residue polypeptide: Deoxyuridine 5'-triphosphate nucleotidohydrolase (179 aa).

Substrate is bound by residues Arg90–Gly92, Asn103, Thr107–Asp109, and Lys117.

The protein belongs to the dUTPase family. Mg(2+) serves as cofactor.

It catalyses the reaction dUTP + H2O = dUMP + diphosphate + H(+). It participates in pyrimidine metabolism; dUMP biosynthesis; dUMP from dCTP (dUTP route): step 2/2. Functionally, this enzyme is involved in nucleotide metabolism: it produces dUMP, the immediate precursor of thymidine nucleotides and it decreases the intracellular concentration of dUTP so that uracil cannot be incorporated into DNA. The protein is Deoxyuridine 5'-triphosphate nucleotidohydrolase of Thermobifida fusca (strain YX).